The sequence spans 439 residues: Glutamyl-tRNA reductase (439 aa).

Substrate is bound by residues 48–51 (TCNR), Ser-107, 112–114 (EPQ), and Gln-118. Cys-49 functions as the Nucleophile in the catalytic mechanism. 187–192 (GAGEMA) contacts NADP(+).

Belongs to the glutamyl-tRNA reductase family. In terms of assembly, homodimer.

The catalysed reaction is (S)-4-amino-5-oxopentanoate + tRNA(Glu) + NADP(+) = L-glutamyl-tRNA(Glu) + NADPH + H(+). Its pathway is porphyrin-containing compound metabolism; protoporphyrin-IX biosynthesis; 5-aminolevulinate from L-glutamyl-tRNA(Glu): step 1/2. Catalyzes the NADPH-dependent reduction of glutamyl-tRNA(Glu) to glutamate 1-semialdehyde (GSA). This Maridesulfovibrio salexigens (strain ATCC 14822 / DSM 2638 / NCIMB 8403 / VKM B-1763) (Desulfovibrio salexigens) protein is Glutamyl-tRNA reductase.